Consider the following 364-residue polypeptide: Aminomethyltransferase (364 aa).

Belongs to the GcvT family. As to quaternary structure, the glycine cleavage system is composed of four proteins: P, T, L and H.

It catalyses the reaction N(6)-[(R)-S(8)-aminomethyldihydrolipoyl]-L-lysyl-[protein] + (6S)-5,6,7,8-tetrahydrofolate = N(6)-[(R)-dihydrolipoyl]-L-lysyl-[protein] + (6R)-5,10-methylene-5,6,7,8-tetrahydrofolate + NH4(+). Its function is as follows. The glycine cleavage system catalyzes the degradation of glycine. The protein is Aminomethyltransferase of Citrobacter koseri (strain ATCC BAA-895 / CDC 4225-83 / SGSC4696).